Consider the following 58-residue polypeptide: Large ribosomal subunit protein uL30 (58 aa).

It belongs to the universal ribosomal protein uL30 family. As to quaternary structure, part of the 50S ribosomal subunit.

The polypeptide is Large ribosomal subunit protein uL30 (Desulfovibrio desulfuricans (strain ATCC 27774 / DSM 6949 / MB)).